A 352-amino-acid chain; its full sequence is Isoflavone-7-O-methyltransferase 6 (352 aa).

118–127 (VLDPTLSGSY) serves as a coordination point for substrate. Glycine 196, aspartate 219, aspartate 239, methionine 240, and lysine 253 together coordinate S-adenosyl-L-methionine. Catalysis depends on histidine 257, which acts as the Proton acceptor.

This sequence belongs to the class I-like SAM-binding methyltransferase superfamily. Cation-independent O-methyltransferase family. COMT subfamily. As to quaternary structure, homodimer.

The enzyme catalyses a 7-hydroxyisoflavone + S-adenosyl-L-methionine = a 7-methoxyisoflavone + S-adenosyl-L-homocysteine + H(+). It participates in phytoalexin biosynthesis; medicarpin biosynthesis. Its function is as follows. Transfers a methyl group to 7-hydroxyls of the isoflavones daidzein, genistein and 6,7,4'-trihydroxyisoflavone. Can also methylate (+)6a-hydroxymaackiain with lower efficiency. In Medicago sativa (Alfalfa), this protein is Isoflavone-7-O-methyltransferase 6.